The chain runs to 196 residues: 3-isopropylmalate dehydratase small subunit (196 aa).

This sequence belongs to the LeuD family. LeuD type 1 subfamily. In terms of assembly, heterodimer of LeuC and LeuD.

It catalyses the reaction (2R,3S)-3-isopropylmalate = (2S)-2-isopropylmalate. The protein operates within amino-acid biosynthesis; L-leucine biosynthesis; L-leucine from 3-methyl-2-oxobutanoate: step 2/4. In terms of biological role, catalyzes the isomerization between 2-isopropylmalate and 3-isopropylmalate, via the formation of 2-isopropylmaleate. The chain is 3-isopropylmalate dehydratase small subunit from Rhodopirellula baltica (strain DSM 10527 / NCIMB 13988 / SH1).